Reading from the N-terminus, the 142-residue chain is Small ribosomal subunit protein uS12y (142 aa).

Position 61 is a hydroxyproline (Pro61).

This sequence belongs to the universal ribosomal protein uS12 family.

In Arabidopsis thaliana (Mouse-ear cress), this protein is Small ribosomal subunit protein uS12y (RPS23B).